Here is a 505-residue protein sequence, read N- to C-terminus: MSRSYNDELQYLDKIHKNCWRIKKGFVPNMLVEGVFYVNDPLEKLMFEELRNACRGGGFGGFLPAMKQIGNVAALPGIVHRSIGLPDVHSGYGFAIGNMAAFDMENPDAVVSPGGVGFDINCGVRLLRTNLDEGDVQPVKEQLAQSLFDHIPVGVGSKGVIPMGAKDLEEALEMGVDWSLREGYAWAEDKEHCEEYGRMLQADPNKVSSKAKKRGLPQLGTLGAGNHYAEIQVVDEIYNDYAAKKMGIDHKGQVCVMIHSGSRGLGHQVATDALVAMEKAMKRDRITVNDRQLACARITSEEGQDYLKGMAAAGNYAWVNRSSMTFLTRQAFSKVFSTTPDDLDMHVIYDVSHNIAKVEEHMVDGRQKTLLVHRKGSTRAFPPHHPLIPVDYQLTGQPVLIGGTMGTCSYVLTGTEQGMTETFGTTCHGAGRALSRAKSRRNLDFQDVLDKLADMGIAIRVASPKLVMEEAPESYKNVTDVVNTCHDAGISKKAIKLRPIAVIKG.

Mn(2+) is bound by residues Asp-119, Cys-122, His-227, His-259, and His-353. A GMP-binding site is contributed by Asn-226 to Glu-230. GMP contacts are provided by residues His-353–Asn-354, Gly-402–Met-405, Ser-409, His-428–Gly-431, and Lys-504. Residue His-428 is the GMP-histidine intermediate of the active site.

This sequence belongs to the RtcB family. As to quaternary structure, catalytic component of the tRNA-splicing ligase complex. Mn(2+) is required as a cofactor.

Its subcellular location is the nucleus. The protein localises to the cytoplasm. The catalysed reaction is a 3'-end 3'-phospho-ribonucleotide-RNA + a 5'-end dephospho-ribonucleoside-RNA + GTP = a ribonucleotidyl-ribonucleotide-RNA + GMP + diphosphate. It carries out the reaction a 3'-end 2',3'-cyclophospho-ribonucleotide-RNA + a 5'-end dephospho-ribonucleoside-RNA + GTP + H2O = a ribonucleotidyl-ribonucleotide-RNA + GMP + diphosphate + H(+). Functionally, catalytic subunit of the tRNA-splicing ligase complex that acts by directly joining spliced tRNA halves to mature-sized tRNAs by incorporating the precursor-derived splice junction phosphate into the mature tRNA as a canonical 3',5'-phosphodiester. May act as an RNA ligase with broad substrate specificity, and may function toward other RNAs. The protein is RNA-splicing ligase RtcB homolog of Danio rerio (Zebrafish).